A 138-amino-acid chain; its full sequence is MSASIGDLIGDSIGDSKKNLNASSKPFVPASLCHHNKQVKDTEAHYCDGKRFDVVISDVLIGWVERTGGKWRGYCNIPGGPAVDLIYIVRFPIGGRDSIKTFRESVISWEHKHYHTLHETIAEVWVVREHFRSKSIYQ.

This is an uncharacterized protein from Acanthamoeba polyphaga mimivirus (APMV).